We begin with the raw amino-acid sequence, 354 residues long: Methylthioribose-1-phosphate isomerase (354 aa).

Substrate is bound by residues 54–56, Arg97, and Gln204; that span reads RGA. The Proton donor role is filled by Asp245. A substrate-binding site is contributed by 255 to 256; the sequence is NK.

The protein belongs to the eIF-2B alpha/beta/delta subunits family. MtnA subfamily.

The enzyme catalyses 5-(methylsulfanyl)-alpha-D-ribose 1-phosphate = 5-(methylsulfanyl)-D-ribulose 1-phosphate. The protein operates within amino-acid biosynthesis; L-methionine biosynthesis via salvage pathway; L-methionine from S-methyl-5-thio-alpha-D-ribose 1-phosphate: step 1/6. In terms of biological role, catalyzes the interconversion of methylthioribose-1-phosphate (MTR-1-P) into methylthioribulose-1-phosphate (MTRu-1-P). In Albidiferax ferrireducens (strain ATCC BAA-621 / DSM 15236 / T118) (Rhodoferax ferrireducens), this protein is Methylthioribose-1-phosphate isomerase.